The chain runs to 306 residues: Homeobox protein HMX3 (306 aa).

Residues 95–181 (HTPRTEVPDK…DKKPCRKKKT (87 aa)) are disordered. Composition is skewed to basic and acidic residues over residues 117-143 (GERD…KSPE) and 153-174 (EEGK…PDKK). The segment at residues 178–237 (KKKTRTVFSRSQVFQLESTFDMKRYLSSSERAGLAASLHLTETQVKIWFQNRRNKWKRQL) is a DNA-binding region (homeobox).

The protein belongs to the HMX homeobox family.

Its subcellular location is the nucleus. In terms of biological role, transcription factor involved in specification of neuronal cell types and which is required for inner ear and hypothalamus development. Binds to the 5'-CAAGTG-3' core sequence. May act as a stage-specific inhibitor of anf1 in the anterior neural plate during the development. This is Homeobox protein HMX3 (hmx3) from Xenopus tropicalis (Western clawed frog).